Here is an 87-residue protein sequence, read N- to C-terminus: Large ribosomal subunit protein bL31B (87 aa).

The protein belongs to the bacterial ribosomal protein bL31 family. Type B subfamily. Part of the 50S ribosomal subunit.

This Burkholderia pseudomallei (strain 1106a) protein is Large ribosomal subunit protein bL31B.